Consider the following 469-residue polypeptide: ATP sulfurylase 4, chloroplastic (469 aa).

The N-terminal 51 residues, 1–51, are a transit peptide targeting the chloroplast; that stretch reads MASSAAAIVSGSPFRSSPLIHNHHASRYAPGSISVVSLPRQVSRRGLSVKS.

It belongs to the sulfate adenylyltransferase family. In terms of assembly, homotetramer. Expressed in roots and leaves.

It localises to the plastid. The protein localises to the chloroplast stroma. It carries out the reaction sulfate + ATP + H(+) = adenosine 5'-phosphosulfate + diphosphate. It participates in sulfur metabolism; hydrogen sulfide biosynthesis; sulfite from sulfate: step 1/3. Sulfate adenylyltransferase. Catalyzes the first step of the sulfate assimilation pathway. This is ATP sulfurylase 4, chloroplastic (APS4) from Arabidopsis thaliana (Mouse-ear cress).